The sequence spans 175 residues: Movement protein (175 aa).

The segment at 30 to 47 (ADLDDDEEVTTGQEELFL) is homodimerization. Residues 50–156 (EQVRARHLFS…QRLTSTERNG (107 aa)) are RNA-binding. S64 and S133 each carry phosphoserine. 2 stretches are compositionally biased toward polar residues: residues 116–141 (SLTS…SQSP) and 148–169 (RLTS…SSTK). Residues 116–175 (SLTSWTHTVNSTPFPQLSTSSGSQSPGKGRLQRLTSTERNGTTLPRTNSGSSTKAMVLHR) are disordered.

It belongs to the polerovirus movement protein family. Homodimer. Post-translationally, phosphorylated.

The protein localises to the host cell junction. It is found in the host plasmodesma. The protein resides in the host Golgi apparatus. Functionally, together with movement protein P3a, facilitates long-distance movement of virions in host. Transports viral genome to neighboring plant cells directly through plasmosdesmata, without any budding. The movement protein allows efficient cell to cell propagation, by bypassing the host cell wall barrier. Binds ssRNA. The protein is Movement protein of Turnip yellows virus (isolate FL-1) (TuYV).